The chain runs to 447 residues: MISRVSRFMTTFVSKYLPDPLIFAVLLTFVTFICAWGLTDSTPVDLVNMWGNGFWNLLGFGMQMALIVVTGNALATSPQIRKFLSTIASIAKTPAQGVVLVTFMGSIACIINWGFGLVVGAMFAKEVARRIKGSDYALLIACAYIAFMTWGGGFSGSMPLLAATPGNPVAHLMMSESNPQGIIPAVSTLFSGYNIFITLSLVICLPFITYMMMPKNGETKSIDPKLIAPDPTFDKKLDKDATLAEKMEESRFLAYTIGALGYSYLGMYFYKNGFNLTINNVNLIFLITGIVLHGSPMAYMRAIINATRSTAGILVQFPFYAGVQLMMEHSGLGGLITEFFINVANKDSFPLLTFFSSAFINFAVPSGGGHWVIQGPFVIPAAQALGADLGKSTMAIAYGEQWMNMAQPFWALPALGIAGLGVRDIMGFCMTALIFTAPIFIIGLYFL.

11 consecutive transmembrane segments (helical) span residues 17 to 37 (LPDPLIFAVLLTFVTFICAWG), 49 to 69 (MWGNGFWNLLGFGMQMALIVV), 98 to 118 (VVLVTFMGSIACIINWGFGLV), 136 to 156 (YALLIACAYIAFMTWGGGFSG), 188 to 208 (TLFSGYNIFITLSLVICLPFI), 252 to 272 (FLAYTIGALGYSYLGMYFYKN), 284 to 304 (IFLITGIVLHGSPMAYMRAII), 321 to 341 (AGVQLMMEHSGLGGLITEFFI), 359 to 379 (FINFAVPSGGGHWVIQGPFVI), 402 to 422 (WMNMAQPFWALPALGIAGLGV), and 427 to 447 (GFCMTALIFTAPIFIIGLYFL).

The protein resides in the cell inner membrane. Its function is as follows. May be responsible for the uptake of short-chain fatty acids. This Haemophilus influenzae (strain ATCC 51907 / DSM 11121 / KW20 / Rd) protein is Putative short-chain fatty acid transporter (atoE).